A 649-amino-acid polypeptide reads, in one-letter code: Protein phosphatase Slingshot homolog 3 (649 aa).

The segment covering 1–20 has biased composition (polar residues); it reads MALVTVSRSPPASGHSTPVG. The tract at residues 1–32 is disordered; that stretch reads MALVTVSRSPPASGHSTPVGPTQDRVVRRRGR. Ala-2 is modified (N-acetylalanine). 2 positions are modified to phosphoserine: Ser-9 and Ser-38. Residues 49-90 form a disordered region; sequence LQDGGDSNVASEADSEPMEEPSGEEQPTEDQTDKGQGLQSPW. Over residues 61 to 78 the composition is skewed to acidic residues; it reads ADSEPMEEPSGEEQPTED. Residue Ser-88 is modified to Phosphoserine. In terms of domain architecture, DEK-C spans 266-321; the sequence is EKMEQAILAELWQVLDTSDLDSVTSKEIRQALELRLGCPLQQYRDFIDNQMLLLMA. One can recognise a Tyrosine-protein phosphatase domain in the interval 325 to 466; it reads RASRIFPHLY…LRTYQGILTA (142 aa). Cys-410 functions as the Phosphocysteine intermediate in the catalytic mechanism. Composition is skewed to low complexity over residues 541–551 and 608–627; these read LEPSESESTPE and TRAF…GMSS. Disordered stretches follow at residues 541–586 and 608–649; these read LEPS…KGPW and TRAF…EDKA. The segment covering 639–649 has biased composition (basic and acidic residues); the sequence is SVDDSREEDKA.

Belongs to the protein-tyrosine phosphatase family. Does not bind to, or colocalize with, filamentous actin. As to expression, expressed in brain, small intestine and testis. Also expressed at lower levels in heart, kidney, liver, spleen and thymus.

It is found in the cytoplasm. The protein localises to the cytoskeleton. It localises to the nucleus. The enzyme catalyses O-phospho-L-tyrosyl-[protein] + H2O = L-tyrosyl-[protein] + phosphate. It carries out the reaction O-phospho-L-seryl-[protein] + H2O = L-seryl-[protein] + phosphate. It catalyses the reaction O-phospho-L-threonyl-[protein] + H2O = L-threonyl-[protein] + phosphate. Functionally, protein phosphatase which may play a role in the regulation of actin filament dynamics. Can dephosphorylate and activate the actin binding/depolymerizing factor cofilin, which subsequently binds to actin filaments and stimulates their disassembly. The sequence is that of Protein phosphatase Slingshot homolog 3 (Ssh3) from Mus musculus (Mouse).